The sequence spans 382 residues: Phenylalanine dehydrogenase (382 aa).

Residue Arg-54 coordinates NAD(+). Lys-78 serves as a coordination point for L-phenylalanine. The active-site Proton donor/acceptor is the Lys-90. Residues Asp-125, Ser-156, Thr-160, 190 to 196 (GLGKVGY), 213 to 214 (DI), 253 to 254 (AF), and 274 to 276 (SAN) each bind NAD(+). Asn-276 lines the L-phenylalanine pocket.

The protein belongs to the Glu/Leu/Phe/Val dehydrogenases family.

The enzyme catalyses L-phenylalanine + NAD(+) + H2O = 3-phenylpyruvate + NH4(+) + NADH + H(+). Activity is not affected by the metal chelating agent EDTA. Addition of 1 mM Mg(2+) results in 15% increase in activity, while the enzyme is strongly inhibited by 1 mM Fe(3+), Fe(2+), Cu(2+), Zn(2+) and Ag(+). Catalyzes the reversible NAD(+)-dependent oxidative deamination of L-phenylalanine to phenylpyruvate. Can also catalyze the oxidative deamination of several other amino acids, with much lower efficiency. Shows activity towards various bulky aromatic alpha-keto acids/esters and (S)-amine alcohols. Can catalyze the amination of 3-(2-chlorophenyl)-2-oxopropionic acid (CPOA) to produce 2-chloro-L-phenylalanine (2-Cl-Phe), a chemical compound used in the pharmaceutical and biotechnology industries. Shows a preference for amination over deamination. This Bacillus thermotolerans (Quasibacillus thermotolerans) protein is Phenylalanine dehydrogenase.